Consider the following 690-residue polypeptide: Glycine--tRNA ligase beta subunit (690 aa).

The protein belongs to the class-II aminoacyl-tRNA synthetase family. Tetramer of two alpha and two beta subunits.

Its subcellular location is the cytoplasm. The enzyme catalyses tRNA(Gly) + glycine + ATP = glycyl-tRNA(Gly) + AMP + diphosphate. This Lactobacillus gasseri (strain ATCC 33323 / DSM 20243 / BCRC 14619 / CIP 102991 / JCM 1131 / KCTC 3163 / NCIMB 11718 / NCTC 13722 / AM63) protein is Glycine--tRNA ligase beta subunit.